The following is a 793-amino-acid chain: MKRKLVTSALPYVNNFPHLGNLIQVLSADVFARFCRLKEYETLYICGTDEYGTATETKALEEKKSPEELCSFYHAIHAEIYNWFNIAFDYFGRTSTPQQTEITQGIFNDLDKNGYITEHTIEQLYCPSCKRFLADRYVLGTCPSCSYDGARGDQCEHCGKLLDPTDLKEPRCSSCGAAPEVRSTTHLYINLPKIVPEYEKWMPKTAEEGRWSNNALQMSKSWLRDGLQERAITRDLKWGIPVPKKGFEDKVFYVWFDAPIGYISITKCWADLAGKDWKAWWLDQNDVELFQFIGKDNIPFHTVIFPCSLIGSGKNWTKLFHMSGTEYLNYENGKFSKSKGVGVFGNDAKESGIPADMWRFYIFYNRPEKNDTQFTWKDFQERVNSELIGNLCNLVNRTATFIHRYYDGKIPQVDGAKSGREDIKSMVKSLREAASASFKKITELSDWAELRDSFHEAFALSSVANKAFQDGEPWKRRETDPEYAEALMSELCYLIKDILILIHPYMPQYADQAAGFFGQKIWSGNIFDGKAPQFNKPEGSFLSWKNLGEREGLKTVENPVIIFKTLDNKVIDAYRERYSGSQKDRKKSEKGCSACKDSGSSKSDAAASSAKPEVKLSPAELFSKKIALKTAKIISVERHPDADKLYIEKLDDGSGEERTILSGLVPFLKEDEILGKTVIIADNLKPRKMRGIESKGMLLAASWYDEEEKEHVELLQAPWAAPGTPVILEGDADISDPEAVKAFYAQKPAAIDADTFFAAPILIEDYIPKIEGKKLLVAGKEMKLEKVKTGEAG.

Residues 11–21 (PYVNNFPHLGN) carry the 'HIGH' region motif. Positions 142, 145, 155, and 158 each coordinate Zn(2+). Positions 334–338 (KFSKS) match the 'KMSKS' region motif. ATP is bound at residue Lys-337. Positions 581–590 (SQKDRKKSEK) are enriched in basic and acidic residues. A disordered region spans residues 581–610 (SQKDRKKSEKGCSACKDSGSSKSDAAASSA). Low complexity predominate over residues 591–610 (GCSACKDSGSSKSDAAASSA). The region spanning 622-727 (FSKKIALKTA…PWAAPGTPVI (106 aa)) is the tRNA-binding domain.

The protein belongs to the class-I aminoacyl-tRNA synthetase family. MetG type 1 subfamily. As to quaternary structure, homodimer. The cofactor is Zn(2+).

It localises to the cytoplasm. The enzyme catalyses tRNA(Met) + L-methionine + ATP = L-methionyl-tRNA(Met) + AMP + diphosphate. Its function is as follows. Is required not only for elongation of protein synthesis but also for the initiation of all mRNA translation through initiator tRNA(fMet) aminoacylation. The polypeptide is Methionine--tRNA ligase (Treponema denticola (strain ATCC 35405 / DSM 14222 / CIP 103919 / JCM 8153 / KCTC 15104)).